The chain runs to 328 residues: Gonadotropin-releasing hormone receptor (328 aa).

Residues 1–38 lie on the Extracellular side of the membrane; the sequence is MANSDSPEQNENHCSAINSSIPLTPGSLPTLTLSGKIR. Asn-18 carries N-linked (GlcNAc...) asparagine glycosylation. Residues 39–58 traverse the membrane as a helical segment; sequence VTVTFFLFLLSTIFNTSFLL. The Cytoplasmic portion of the chain corresponds to 59-77; the sequence is KLQNWTQRKEKRKKLSRMK. A helical membrane pass occupies residues 78–97; it reads LLLKHLTLANLLETLIVMPL. Residues 98–115 are Extracellular-facing; sequence DGMWNITVQWYAGELLCK. Asn-102 carries N-linked (GlcNAc...) asparagine glycosylation. Cys-114 and Cys-196 form a disulfide bridge. The chain crosses the membrane as a helical span at residues 116–137; the sequence is VLSYLKLFSMYAPAFMMVVISL. The Cytoplasmic segment spans residues 138–164; it reads DRSLAITKPLAVKSNSKLGQFMIGLAW. Residues 165–184 form a helical membrane-spanning segment; sequence LLSSIFAGPQLYIFGMIHLA. The Extracellular segment spans residues 185–212; it reads DDSGQTEGFSQCVTHCSFPQWWHQAFYN. The chain crosses the membrane as a helical span at residues 213–232; the sequence is FFTFSCLFIIPLLIMVICNA. At 233 to 281 the chain is on the cytoplasmic side; the sequence is KIIFTLTRVLHQDPHKLQLNQSKNNIPRARLRTLKMTVAFATSFTVCWT. The helical transmembrane segment at 282 to 300 threads the bilayer; that stretch reads PYYVLGIWYWFDPDMVNRV. Residues 301–306 lie on the Extracellular side of the membrane; the sequence is SDPVNH. A helical transmembrane segment spans residues 307–326; the sequence is FFFLFAFLNPCFDPLIYGYF. The Cytoplasmic portion of the chain corresponds to 327–328; that stretch reads SL.

The protein belongs to the G-protein coupled receptor 1 family.

It localises to the cell membrane. Receptor for gonadotropin releasing hormone (GnRH) that mediates the action of GnRH to stimulate the secretion of the gonadotropic hormones luteinizing hormone (LH) and follicle-stimulating hormone (FSH). This receptor mediates its action by association with G-proteins that activate a phosphatidylinositol-calcium second messenger system. The sequence is that of Gonadotropin-releasing hormone receptor (GNRHR) from Bos taurus (Bovine).